The sequence spans 477 residues: 3-isopropylmalate dehydratase large subunit (477 aa).

The [4Fe-4S] cluster site is built by C351, C411, and C414.

The protein belongs to the aconitase/IPM isomerase family. LeuC type 1 subfamily. In terms of assembly, heterodimer of LeuC and LeuD. Requires [4Fe-4S] cluster as cofactor.

The enzyme catalyses (2R,3S)-3-isopropylmalate = (2S)-2-isopropylmalate. Its pathway is amino-acid biosynthesis; L-leucine biosynthesis; L-leucine from 3-methyl-2-oxobutanoate: step 2/4. In terms of biological role, catalyzes the isomerization between 2-isopropylmalate and 3-isopropylmalate, via the formation of 2-isopropylmaleate. The protein is 3-isopropylmalate dehydratase large subunit of Kineococcus radiotolerans (strain ATCC BAA-149 / DSM 14245 / SRS30216).